A 1473-amino-acid polypeptide reads, in one-letter code: Sulfite reductase [NADPH] subunit beta (1473 aa).

The Flavodoxin-like domain occupies 728–876 (LTILFASDGG…AYNLWEPELW (149 aa)). Cys-1328, Cys-1334, Cys-1373, and Cys-1377 together coordinate [4Fe-4S] cluster. Cys-1377 lines the siroheme pocket.

This sequence belongs to the nitrite and sulfite reductase 4Fe-4S domain family. As to quaternary structure, alpha(2)-beta(2). The alpha component is a flavoprotein, the beta component is a hemoprotein. Siroheme serves as cofactor. Requires [4Fe-4S] cluster as cofactor.

Its subcellular location is the cytoplasm. The catalysed reaction is hydrogen sulfide + 3 NADP(+) + 3 H2O = sulfite + 3 NADPH + 4 H(+). Its pathway is sulfur metabolism; hydrogen sulfide biosynthesis; hydrogen sulfide from sulfite (NADPH route): step 1/1. Catalyzes the reduction of sulfite to sulfide, one of several activities required for the biosynthesis of L-cysteine from sulfate. This is Sulfite reductase [NADPH] subunit beta (sir1) from Schizosaccharomyces pombe (strain 972 / ATCC 24843) (Fission yeast).